The following is a 206-amino-acid chain: Putative amino-acid transporter YggA (206 aa).

Helical transmembrane passes span 1–21 (MFATTLQGFTLGLAMIIPIGA), 37–57 (LLAATLCCLCDLILIGIGVFG), 65–85 (SPIGLALLTWGGVLFLCWFGI), 116–136 (LGVTLLNPHVYLDTLMLLGSF), 148–168 (FAAGAMLASLVWFYSLAFGAA), and 185–205 (TIVGLIMLGLALQLASGALLA).

The protein belongs to the LysE/ArgO transporter (TC 2.A.75) family.

The protein resides in the cell membrane. The polypeptide is Putative amino-acid transporter YggA (yggA) (Aeromonas salmonicida).